Consider the following 243-residue polypeptide: Triosephosphate isomerase (243 aa).

9–11 (NWK) is a binding site for substrate. His-98 functions as the Electrophile in the catalytic mechanism. Glu-167 functions as the Proton acceptor in the catalytic mechanism. Substrate-binding positions include Gly-173, Ser-205, and 226-227 (GG).

It belongs to the triosephosphate isomerase family. As to quaternary structure, homodimer.

Its subcellular location is the cytoplasm. It carries out the reaction D-glyceraldehyde 3-phosphate = dihydroxyacetone phosphate. Its pathway is carbohydrate biosynthesis; gluconeogenesis. It participates in carbohydrate degradation; glycolysis; D-glyceraldehyde 3-phosphate from glycerone phosphate: step 1/1. Its function is as follows. Involved in the gluconeogenesis. Catalyzes stereospecifically the conversion of dihydroxyacetone phosphate (DHAP) to D-glyceraldehyde-3-phosphate (G3P). The sequence is that of Triosephosphate isomerase from Mesomycoplasma hyorhinis (Mycoplasma hyorhinis).